A 140-amino-acid polypeptide reads, in one-letter code: uncharacterized protein (140 aa).

Residues 3-131 (RLDHIGIAVF…NGVLVELCEP (129 aa)) enclose the VOC domain. Positions 6, 53, 77, and 127 each coordinate a divalent metal cation.

It belongs to the methylmalonyl-CoA epimerase family.

This is an uncharacterized protein from Bacillus subtilis (strain 168).